Consider the following 123-residue polypeptide: DNA-directed RNA polymerase subunit omega (123 aa).

A disordered region spans residues 72–100 (QRVLPSEDEEDAAREERGQQMEALPAPPV).

Belongs to the RNA polymerase subunit omega family. In terms of assembly, the RNAP catalytic core consists of 2 alpha, 1 beta, 1 beta' and 1 omega subunit. When a sigma factor is associated with the core the holoenzyme is formed, which can initiate transcription.

It carries out the reaction RNA(n) + a ribonucleoside 5'-triphosphate = RNA(n+1) + diphosphate. Promotes RNA polymerase assembly. Latches the N- and C-terminal regions of the beta' subunit thereby facilitating its interaction with the beta and alpha subunits. The protein is DNA-directed RNA polymerase subunit omega of Maricaulis maris (strain MCS10) (Caulobacter maris).